Reading from the N-terminus, the 122-residue chain is Protein translocase subunit SecE (122 aa).

Transmembrane regions (helical) follow at residues leucine 14–phenylalanine 34, proline 38–leucine 58, and leucine 93–leucine 113.

This sequence belongs to the SecE/SEC61-gamma family. As to quaternary structure, component of the Sec protein translocase complex. Heterotrimer consisting of SecY, SecE and SecG subunits. The heterotrimers can form oligomers, although 1 heterotrimer is thought to be able to translocate proteins. Interacts with the ribosome. Interacts with SecDF, and other proteins may be involved. Interacts with SecA.

Its subcellular location is the cell inner membrane. Its function is as follows. Essential subunit of the Sec protein translocation channel SecYEG. Clamps together the 2 halves of SecY. May contact the channel plug during translocation. The protein is Protein translocase subunit SecE of Pseudomonas aeruginosa (strain ATCC 15692 / DSM 22644 / CIP 104116 / JCM 14847 / LMG 12228 / 1C / PRS 101 / PAO1).